Reading from the N-terminus, the 375-residue chain is Paralyzed arrest at two-fold protein 6 (375 aa).

The interval 1-51 is disordered; it reads MSTLGRSKTPSRDEPKKPGVFEKLSGTLSRKKKAPEDEHGNQGGAHHATDE. The segment covering 10–20 has biased composition (basic and acidic residues); sequence PSRDEPKKPGV. 2 consecutive Calponin-homology (CH) domains span residues 99 to 206 and 266 to 373; these read AQVV…LHYR and AHVK…TKYK.

It belongs to the parvin family. As to quaternary structure, may interact (via calponin-homology (CH) 2 domain) with pat-4 (via kinase domain). May form a complex with unc-112 and pat-4. Component of an integrin containing attachment complex, composed of at least pat-2, pat-3, pat-4, pat-6, unc-52, unc-97 and unc-112. Expressed from 1.5 stage embryos, mostly within the muscle cells. In adult hermaphrodites, expressed in the attachments of other muscles, including the uterine, anal depressor, anal sphincter, and vulval muscles, as well as in the spermatheca and the distal tip cells. Expressed in mechanosensory receptor neurons ALML/R, PLML/R, AVM, and PVM. Localizes at body wall muscle attachments.

The protein localises to the cytoplasm. The protein resides in the cytoskeleton. It localises to the myofibril. It is found in the sarcomere. Its subcellular location is the m line. The protein localises to the perikaryon. The protein resides in the cell projection. It localises to the axon. Functionally, involved in the regulation of cell adhesion and cytoskeleton organization. Component of an integrin containing attachment complex, which is required for muscle development and maintenance. During embryonic development, required to recruit cpna-1, unc-89 and myofilaments to newly forming integrin attachments composed of integrins pat-2/pat-3, pat-4 and unc-112. Also required to reposition the integrin-based attachments so that they form the highly ordered array of dense body and M-line attachments that are characteristic of mature muscle cells. During the formation of neuromuscular junctions at the larval stage, negatively regulates membrane protrusion from body wall muscles. This Caenorhabditis elegans protein is Paralyzed arrest at two-fold protein 6.